The chain runs to 202 residues: MLILLNLSLLFYVLFDSPGSIPVFVALLKNFSRKKQQRVILRECLFALGALILFVTFGRSFFQFLDISLYAFQIIGGFLLFTVSIKMMLAPMPEKAKDDTSKTEPIFFPLAFPVITGPAVITALLSYMEEGIYSREIIFTAMIIAWAFSLFTLLCSSFFDRLSGNFGLLALERLFGIALLLMSVNLMLKGISIAFNIGFYIG.

Transmembrane regions (helical) follow at residues 7–27, 39–59, 61–81, 105–125, 137–157, and 175–195; these read LSLL…FVAL, VILR…TFGR, FFQF…FLLF, PIFF…TALL, IIFT…LCSS, and FGIA…SIAF.

The protein belongs to the UPF0056 (MarC) family.

It localises to the cell membrane. The polypeptide is UPF0056 membrane protein CPn_1010/CP_0843/CPj1010/CpB1048 (Chlamydia pneumoniae (Chlamydophila pneumoniae)).